The primary structure comprises 328 residues: D-cysteine desulfhydrase (328 aa).

N6-(pyridoxal phosphate)lysine is present on Lys-51.

Belongs to the ACC deaminase/D-cysteine desulfhydrase family. In terms of assembly, homodimer. The cofactor is pyridoxal 5'-phosphate.

The catalysed reaction is D-cysteine + H2O = hydrogen sulfide + pyruvate + NH4(+) + H(+). Catalyzes the alpha,beta-elimination reaction of D-cysteine and of several D-cysteine derivatives. It could be a defense mechanism against D-cysteine. The chain is D-cysteine desulfhydrase from Salmonella schwarzengrund (strain CVM19633).